We begin with the raw amino-acid sequence, 100 residues long: Urease subunit gamma (100 aa).

This sequence belongs to the urease gamma subunit family. As to quaternary structure, heterotrimer of UreA (gamma), UreB (beta) and UreC (alpha) subunits. Three heterotrimers associate to form the active enzyme.

The protein localises to the cytoplasm. The enzyme catalyses urea + 2 H2O + H(+) = hydrogencarbonate + 2 NH4(+). It participates in nitrogen metabolism; urea degradation; CO(2) and NH(3) from urea (urease route): step 1/1. The chain is Urease subunit gamma from Cereibacter sphaeroides (strain ATCC 17029 / ATH 2.4.9) (Rhodobacter sphaeroides).